A 647-amino-acid chain; its full sequence is Starch synthase 1, chloroplastic/amyloplastic (647 aa).

The N-terminal 41 residues, 1 to 41, are a transit peptide targeting the chloroplast; it reads MAATGVGAGCLAPSVRLRADPATAARASACVVRARLRRVAR. A compositionally biased stretch (pro residues) spans 66–91; it reads PLVPGFLAPPPPAPAQSPAPTQPPLP. The tract at residues 66 to 95 is disordered; sequence PLVPGFLAPPPPAPAQSPAPTQPPLPDAGV. K153 is a binding site for ADP-alpha-D-glucose.

Belongs to the glycosyltransferase 1 family. Bacterial/plant glycogen synthase subfamily.

Its subcellular location is the plastid. The protein resides in the chloroplast. The protein localises to the amyloplast. It carries out the reaction [(1-&gt;4)-alpha-D-glucosyl](n) + ADP-alpha-D-glucose = [(1-&gt;4)-alpha-D-glucosyl](n+1) + ADP + H(+). It participates in glycan biosynthesis; starch biosynthesis. This chain is Starch synthase 1, chloroplastic/amyloplastic (WSSI-2), found in Triticum aestivum (Wheat).